The following is a 290-amino-acid chain: 4-diphosphocytidyl-2-C-methyl-D-erythritol kinase (290 aa).

Residue Lys10 is part of the active site. 95-105 (PVAAGLAGGSS) is a binding site for ATP. Asp137 is a catalytic residue.

The protein belongs to the GHMP kinase family. IspE subfamily.

It carries out the reaction 4-CDP-2-C-methyl-D-erythritol + ATP = 4-CDP-2-C-methyl-D-erythritol 2-phosphate + ADP + H(+). The protein operates within isoprenoid biosynthesis; isopentenyl diphosphate biosynthesis via DXP pathway; isopentenyl diphosphate from 1-deoxy-D-xylulose 5-phosphate: step 3/6. In terms of biological role, catalyzes the phosphorylation of the position 2 hydroxy group of 4-diphosphocytidyl-2C-methyl-D-erythritol. The protein is 4-diphosphocytidyl-2-C-methyl-D-erythritol kinase of Geobacillus thermodenitrificans (strain NG80-2).